A 179-amino-acid chain; its full sequence is UPF0227 protein Sbal_2415 (179 aa).

It belongs to the UPF0227 family.

This chain is UPF0227 protein Sbal_2415, found in Shewanella baltica (strain OS155 / ATCC BAA-1091).